The sequence spans 440 residues: Chromosome partition protein MukF (440 aa).

A leucine-zipper region spans residues 208–236 (LSETSGTLRELQDTLDAAGDKLQANLLRI).

Belongs to the MukF family. In terms of assembly, interacts, and probably forms a ternary complex, with MukE and MukB via its C-terminal region. The complex formation is stimulated by calcium or magnesium. It is required for an interaction between MukE and MukB.

The protein localises to the cytoplasm. The protein resides in the nucleoid. Involved in chromosome condensation, segregation and cell cycle progression. May participate in facilitating chromosome segregation by condensation DNA from both sides of a centrally located replisome during cell division. Not required for mini-F plasmid partitioning. Probably acts via its interaction with MukB and MukE. Overexpression results in anucleate cells. It has a calcium binding activity. This chain is Chromosome partition protein MukF, found in Klebsiella pneumoniae (strain 342).